We begin with the raw amino-acid sequence, 143 residues long: uncharacterized protein (143 aa).

The protein resides in the mitochondrion. This is an uncharacterized protein from Arabidopsis thaliana (Mouse-ear cress).